Consider the following 222-residue polypeptide: Uracil-DNA glycosylase (222 aa).

Asp61 serves as the catalytic Proton acceptor.

This sequence belongs to the uracil-DNA glycosylase (UDG) superfamily. UNG family.

The protein localises to the cytoplasm. It catalyses the reaction Hydrolyzes single-stranded DNA or mismatched double-stranded DNA and polynucleotides, releasing free uracil.. Excises uracil residues from the DNA which can arise as a result of misincorporation of dUMP residues by DNA polymerase or due to deamination of cytosine. The protein is Uracil-DNA glycosylase of Actinobacillus succinogenes (strain ATCC 55618 / DSM 22257 / CCUG 43843 / 130Z).